Here is a 434-residue protein sequence, read N- to C-terminus: Enolase 2 (434 aa).

Q171 lines the (2R)-2-phosphoglycerate pocket. The active-site Proton donor is the E213. Mg(2+) is bound by residues D250, E293, and D320. (2R)-2-phosphoglycerate-binding residues include K345, R374, S375, and K396. K345 functions as the Proton acceptor in the catalytic mechanism.

Belongs to the enolase family. Mg(2+) serves as cofactor.

It is found in the cytoplasm. It localises to the secreted. The protein localises to the cell surface. It catalyses the reaction (2R)-2-phosphoglycerate = phosphoenolpyruvate + H2O. It participates in carbohydrate degradation; glycolysis; pyruvate from D-glyceraldehyde 3-phosphate: step 4/5. Catalyzes the reversible conversion of 2-phosphoglycerate (2-PG) into phosphoenolpyruvate (PEP). It is essential for the degradation of carbohydrates via glycolysis. This Streptomyces coelicolor (strain ATCC BAA-471 / A3(2) / M145) protein is Enolase 2.